A 205-amino-acid chain; its full sequence is Macrophage immunometabolism regulator (205 aa).

The interval 1-40 is disordered; it reads MEVDINGVNRTNNSVPSTAEGSSPSKPDPEKPRCSSTPCS. Positions 8–25 are enriched in polar residues; it reads VNRTNNSVPSTAEGSSPS.

This sequence belongs to the UNC119-binding protein family. In terms of assembly, interacts with unc119 family proteins; interaction preferentially takes place when unc119 proteins are unliganded with myristoylated proteins.

It is found in the cytoplasm. The protein resides in the cell projection. The protein localises to the cilium. May play a role in immune regulation through regulation of the macrophage function. May also play a role in trafficking of proteins via its interaction with unc119 family cargo adapters. May play a role in ciliary membrane localization. This is Macrophage immunometabolism regulator (macir) from Xenopus laevis (African clawed frog).